A 194-amino-acid polypeptide reads, in one-letter code: Small ribosomal subunit protein uS4 (194 aa).

Position 66 is an N6-acetyllysine (Lys-66). A Glycyl lysine isopeptide (Lys-Gly) (interchain with G-Cter in SUMO2) cross-link involves residue Lys-93. Residues 108–182 form the S4 RNA-binding domain; the sequence is RRLQTQVFKL…VKRKNAKKGQ (75 aa). Position 116 is an N6-acetyllysine (Lys-116). Lys-139 participates in a covalent cross-link: Glycyl lysine isopeptide (Lys-Gly) (interchain with G-Cter in SUMO2). At Ser-153 the chain carries Phosphoserine. N6-acetyllysine is present on Lys-155. The interval 162 to 194 is disordered; the sequence is RSPYGGGRPGRVKRKNAKKGQGGAGAGDDEEED. A Phosphoserine modification is found at Ser-163.

It belongs to the universal ribosomal protein uS4 family. In terms of assembly, component of the small ribosomal subunit. Part of the small subunit (SSU) processome, composed of more than 70 proteins and the RNA chaperone small nucleolar RNA (snoRNA) U3.

Its subcellular location is the cytoplasm. The protein localises to the nucleus. The protein resides in the nucleolus. Functionally, component of the small ribosomal subunit. The ribosome is a large ribonucleoprotein complex responsible for the synthesis of proteins in the cell. Part of the small subunit (SSU) processome, first precursor of the small eukaryotic ribosomal subunit. During the assembly of the SSU processome in the nucleolus, many ribosome biogenesis factors, an RNA chaperone and ribosomal proteins associate with the nascent pre-rRNA and work in concert to generate RNA folding, modifications, rearrangements and cleavage as well as targeted degradation of pre-ribosomal RNA by the RNA exosome. The polypeptide is Small ribosomal subunit protein uS4 (RPS9) (Papio anubis (Olive baboon)).